Reading from the N-terminus, the 130-residue chain is Small ribosomal subunit protein uS8 (130 aa).

This sequence belongs to the universal ribosomal protein uS8 family. As to quaternary structure, part of the 30S ribosomal subunit. Contacts proteins S5 and S12.

Functionally, one of the primary rRNA binding proteins, it binds directly to 16S rRNA central domain where it helps coordinate assembly of the platform of the 30S subunit. This is Small ribosomal subunit protein uS8 from Onion yellows phytoplasma (strain OY-M).